The sequence spans 100 residues: Urease subunit gamma (100 aa).

Belongs to the urease gamma subunit family. As to quaternary structure, heterotrimer of UreA (gamma), UreB (beta) and UreC (alpha) subunits. Three heterotrimers associate to form the active enzyme.

It localises to the cytoplasm. The enzyme catalyses urea + 2 H2O + H(+) = hydrogencarbonate + 2 NH4(+). It participates in nitrogen metabolism; urea degradation; CO(2) and NH(3) from urea (urease route): step 1/1. This chain is Urease subunit gamma, found in Burkholderia thailandensis (strain ATCC 700388 / DSM 13276 / CCUG 48851 / CIP 106301 / E264).